We begin with the raw amino-acid sequence, 119 residues long: Large ribosomal subunit protein bL20 (119 aa).

This sequence belongs to the bacterial ribosomal protein bL20 family.

Its function is as follows. Binds directly to 23S ribosomal RNA and is necessary for the in vitro assembly process of the 50S ribosomal subunit. It is not involved in the protein synthesizing functions of that subunit. The polypeptide is Large ribosomal subunit protein bL20 (Azorhizobium caulinodans (strain ATCC 43989 / DSM 5975 / JCM 20966 / LMG 6465 / NBRC 14845 / NCIMB 13405 / ORS 571)).